Reading from the N-terminus, the 320-residue chain is tRNA-cytidine(32) 2-sulfurtransferase (320 aa).

Positions 54 to 59 (SGGKDS) match the PP-loop motif motif. The [4Fe-4S] cluster site is built by cysteine 129, cysteine 132, and cysteine 220.

The protein belongs to the TtcA family. Homodimer. Mg(2+) serves as cofactor. It depends on [4Fe-4S] cluster as a cofactor.

It is found in the cytoplasm. It catalyses the reaction cytidine(32) in tRNA + S-sulfanyl-L-cysteinyl-[cysteine desulfurase] + AH2 + ATP = 2-thiocytidine(32) in tRNA + L-cysteinyl-[cysteine desulfurase] + A + AMP + diphosphate + H(+). It participates in tRNA modification. In terms of biological role, catalyzes the ATP-dependent 2-thiolation of cytidine in position 32 of tRNA, to form 2-thiocytidine (s(2)C32). The sulfur atoms are provided by the cysteine/cysteine desulfurase (IscS) system. In Bordetella bronchiseptica (strain ATCC BAA-588 / NCTC 13252 / RB50) (Alcaligenes bronchisepticus), this protein is tRNA-cytidine(32) 2-sulfurtransferase.